Here is a 124-residue protein sequence, read N- to C-terminus: Small ribosomal subunit protein eS6 (124 aa).

It belongs to the eukaryotic ribosomal protein eS6 family.

The polypeptide is Small ribosomal subunit protein eS6 (Methanococcus maripaludis (strain DSM 14266 / JCM 13030 / NBRC 101832 / S2 / LL)).